Here is a 522-residue protein sequence, read N- to C-terminus: F-box/LRR-repeat protein 16 (522 aa).

The 47-residue stretch at 38 to 84 folds into the F-box domain; the sequence is YDFTANLPDDCLAHIFQFLSAGDRKRCSLVSKRWLLVDGQNRHRLSL. LRR repeat units follow at residues 115 to 140, 141 to 166, 169 to 191, 266 to 290, 291 to 316, 319 to 344, 348 to 369, 370 to 393, 395 to 420, and 421 to 447; these read SFSL…KLRG, CREI…SCGS, FGAK…SLKR, RLQV…HIVK, TPDC…HIDG, VKRI…VLIG, TYMS…ALCG, SGTI…KFCI, GCLI…KVKK, and CSLV…DDDE.

This Arabidopsis thaliana (Mouse-ear cress) protein is F-box/LRR-repeat protein 16 (FBL16).